The sequence spans 344 residues: Phosphoribosylformylglycinamidine cyclo-ligase (344 aa).

Belongs to the AIR synthase family.

The protein resides in the cytoplasm. It catalyses the reaction 2-formamido-N(1)-(5-O-phospho-beta-D-ribosyl)acetamidine + ATP = 5-amino-1-(5-phospho-beta-D-ribosyl)imidazole + ADP + phosphate + H(+). It functions in the pathway purine metabolism; IMP biosynthesis via de novo pathway; 5-amino-1-(5-phospho-D-ribosyl)imidazole from N(2)-formyl-N(1)-(5-phospho-D-ribosyl)glycinamide: step 2/2. In Exiguobacterium sp. (strain ATCC BAA-1283 / AT1b), this protein is Phosphoribosylformylglycinamidine cyclo-ligase.